A 63-amino-acid polypeptide reads, in one-letter code: Cecropin-C (63 aa).

An N-terminal signal peptide occupies residues 1–23 (MNFYKIFVFVALILAISIGQSEA). R62 bears the Arginine amide mark.

Belongs to the cecropin family.

It is found in the secreted. In terms of biological role, cecropins have lytic and antibacterial activity against several Gram-positive and Gram-negative bacteria. This chain is Cecropin-C (CecC), found in Drosophila mauritiana (Fruit fly).